A 447-amino-acid chain; its full sequence is MREIISIHIGQAGIQVGNSCWELYCLEHGIQPDGLMPSDTSLGVARDAFNTFFSETGAGKHVPRALFVDLEPTVIDEVKTGPYRQLFHPEQLISYKEDAANNFARGHYTVGREIVDPCLDRIRKLADNCTGLQGFLVFNAVGGGTGSGLGSLLLERLSVDYGRKSKLGFTIYPSPQISTAVVEPYNSVLSTHSLIEHTDVVVLLDNEAIYDICKRSLDIERPTYTNLNRLISQVISSLTTSLRFDGAINVDITEFQTNLVPYPRIHFMLSSYAPIISVEKAYHEQHSVPEITNSVFESSSVMAKCDPRHGKYMACCLMYRGDVVPKDVNAAVHSIKTKRTVQFVDWCPTGFKCGINYQPPTVVPGGDLAKVQRAVCMISNNTAVAEVFSRIDRKFDLMYAKRAFVHWYVGEGMEEGEFSEAREDLAALEKDYEEVGAEVEEDDEEEY.

Positions 11, 71, 144, 145, 179, 206, and 228 each coordinate GTP. Glutamate 71 is a Mg(2+) binding site. Glutamate 254 is a catalytic residue.

Belongs to the tubulin family. As to quaternary structure, dimer of alpha and beta chains. A typical microtubule is a hollow water-filled tube with an outer diameter of 25 nm and an inner diameter of 15 nM. Alpha-beta heterodimers associate head-to-tail to form protofilaments running lengthwise along the microtubule wall with the beta-tubulin subunit facing the microtubule plus end conferring a structural polarity. Microtubules usually have 13 protofilaments but different protofilament numbers can be found in some organisms and specialized cells. It depends on Mg(2+) as a cofactor. Post-translationally, undergoes a tyrosination/detyrosination cycle, the cyclic removal and re-addition of a C-terminal tyrosine residue by the enzymes tubulin tyrosine carboxypeptidase (TTCP) and tubulin tyrosine ligase (TTL), respectively.

Its subcellular location is the cytoplasm. The protein resides in the cytoskeleton. The enzyme catalyses GTP + H2O = GDP + phosphate + H(+). Tubulin is the major constituent of microtubules, a cylinder consisting of laterally associated linear protofilaments composed of alpha- and beta-tubulin heterodimers. Microtubules grow by the addition of GTP-tubulin dimers to the microtubule end, where a stabilizing cap forms. Below the cap, tubulin dimers are in GDP-bound state, owing to GTPase activity of alpha-tubulin. In Eleusine indica (Goosegrass), this protein is Tubulin alpha-2 chain (TUBA2).